A 146-amino-acid polypeptide reads, in one-letter code: Tol-Pal system protein TolR (146 aa).

A helical transmembrane segment spans residues 16-36; that stretch reads VVPYIDVMLVLLVIFMVTAPM.

It belongs to the ExbD/TolR family. As to quaternary structure, the Tol-Pal system is composed of five core proteins: the inner membrane proteins TolA, TolQ and TolR, the periplasmic protein TolB and the outer membrane protein Pal. They form a network linking the inner and outer membranes and the peptidoglycan layer.

It is found in the cell inner membrane. Functionally, part of the Tol-Pal system, which plays a role in outer membrane invagination during cell division and is important for maintaining outer membrane integrity. The protein is Tol-Pal system protein TolR of Pseudomonas aeruginosa (strain ATCC 15692 / DSM 22644 / CIP 104116 / JCM 14847 / LMG 12228 / 1C / PRS 101 / PAO1).